A 380-amino-acid chain; its full sequence is Reducing-end xylose-releasing exo-oligoxylanase Rex8A (380 aa).

Catalysis depends on E70, which acts as the Proton donor. D265 functions as the Proton acceptor in the catalytic mechanism.

It belongs to the glycosyl hydrolase 8 (cellulase D) family.

It catalyses the reaction Hydrolysis of (1-&gt;4)-beta-D-xylose residues from the reducing end of oligosaccharides.. Its pathway is glycan degradation; xylan degradation. Its function is as follows. Involved in depolymerization of xylan, a major component of the lignocellulosic substrates. Acts as an exo-oligoxylanase that efficiently hydrolyzes xylooligosaccharides, releasing xylose from their reducing ends. Hydrolyzes xylooligomers of 3 to 6 xylose units to xylose and xylobiose. Besides linear xylooligosaccharides, also hydrolyzes branched xylooligomers, such as xylooligomers decorated with 4-O-methyl-D-glucuronic acid moieties. Its proposed role is the degradation of xylooligomers produced by the activity of extracellular xylanases once they have been transported inside cells. Shows minor activity on polymeric xylan (glucuronoxylan from beechwood). Is not active on cellooligosaccharides or cellulosic substrates, or on other polysaccharides such as pectin, polygalacturonic acid, laminarin, or lichenan. This Paenibacillus barcinonensis protein is Reducing-end xylose-releasing exo-oligoxylanase Rex8A.